The sequence spans 521 residues: Vang-like protein 2 (521 aa).

A disordered region spans residues 1–81; that stretch reads MDNDSQYSGY…TTVVTGTSEH (81 aa). At 1 to 108 the chain is on the cytoplasmic side; the sequence is MDNDSQYSGY…AKLDCSRHLG (108 aa). Over residues 15–33 the composition is skewed to basic residues; the sequence is GHSRSSRKHRDRRERHRSK. A compositionally biased stretch (basic and acidic residues) spans 57–67; the sequence is ESTRGEDRDDN. Low complexity predominate over residues 69–81; that stretch reads GETTTVVTGTSEH. The chain crosses the membrane as a helical span at residues 109 to 129; the sequence is VVIGGALALLSFLTPIAFMLL. The Extracellular segment spans residues 130–147; it reads PQILWREDLEQCGTACEG. The helical transmembrane segment at 148–168 threads the bilayer; that stretch reads LFISVAFKLLILLLGSWALFF. Over 169–178 the chain is Cytoplasmic; it reads RRPKAFFPRV. A helical membrane pass occupies residues 179 to 199; that stretch reads FVFRALLMVLVFLLVVSYWLF. At 200–218 the chain is on the extracellular side; it reads YGVRILESRDKNYQGIVQY. The helical transmembrane segment at 219 to 239 threads the bilayer; it reads AVSLVDALLFVHYLAVVLLEL. The Cytoplasmic portion of the chain corresponds to 240-521; sequence RQLQPQFTVK…VMRLQSETSV (282 aa). A PDZ-binding motif is present at residues 518–521; sequence ETSV.

It belongs to the Vang family. In terms of assembly, interacts with dvl/dsh. Interacts with prickle3.

It localises to the cell membrane. Functionally, has a role in non-canonical Wnt/planar cell polarity (PCP) signaling; can recruit dvl/dsh and prickle from the cytoplasm to the plasma membrane. Acts in a PCP complex to regulate the polarized assembly of fibronectrin on the surface of the mesoderm during gastrulation. Regulates convergent extension in both dorsal mesoderm and neural tissue without affecting cell fate. Regulates neural fold closure during neurulation. May be required for cell surface localization of fzd3 and fzd6 in the inner ear. This is Vang-like protein 2 from Xenopus tropicalis (Western clawed frog).